Reading from the N-terminus, the 747-residue chain is Photosystem I P700 chlorophyll a apoprotein A2 (747 aa).

Helical transmembrane passes span 46 to 69 (LFAT…FHIA), 135 to 158 (LFQG…LHLQ), 175 to 199 (LNHH…HVAI), 273 to 291 (IAHH…GHMY), 341 to 364 (LHFQ…QHMG), 380 to 406 (SALY…IFFV), 428 to 450 (ALIS…IYVH), and 530 to 548 (FLVH…LILI). Cys572 and Cys581 together coordinate [4Fe-4S] cluster. Helical transmembrane passes span 588 to 609 (ATYL…YWHW) and 656 to 678 (LSPW…MFLI). Divinyl chlorophyll a is bound by residues His667, Met675, and Tyr683. Trp684 is a binding site for phylloquinone. Residues 720 to 740 (LVGLTHFTVGNFVTFGAFVIA) form a helical membrane-spanning segment.

Belongs to the PsaA/PsaB family. As to quaternary structure, the PsaA/B heterodimer binds the P700 divinyl chlorophyll special pair and subsequent electron acceptors. PSI consists of a core antenna complex that captures photons, and an electron transfer chain that converts photonic excitation into a charge separation. The cyanobacterial PSI reaction center is composed of one copy each of PsaA,B,C,D,E,F,I,J,K,L,M and X, and forms trimeric complexes. Requires PSI electron transfer chain: 5 divinyl chlorophyll a, 1 divinyl chlorophyll a', 2 phylloquinones and 3 4Fe-4S clusters. PSI core antenna: 90 divinyl chlorophyll a, 22 carotenoids, 3 phospholipids and 1 galactolipid. P700 is a divinyl chlorophyll a/divinyl chlorophyll a' dimer, A0 is one or more divinyl chlorophyll a, A1 is one or both phylloquinones and FX is a shared 4Fe-4S iron-sulfur center. as cofactor.

The protein resides in the cellular thylakoid membrane. The catalysed reaction is reduced [plastocyanin] + hnu + oxidized [2Fe-2S]-[ferredoxin] = oxidized [plastocyanin] + reduced [2Fe-2S]-[ferredoxin]. Its function is as follows. PsaA and PsaB bind P700, the primary electron donor of photosystem I (PSI), as well as the electron acceptors A0, A1 and FX. PSI is a plastocyanin/cytochrome c6-ferredoxin oxidoreductase, converting photonic excitation into a charge separation, which transfers an electron from the donor P700 chlorophyll pair to the spectroscopically characterized acceptors A0, A1, FX, FA and FB in turn. Oxidized P700 is reduced on the lumenal side of the thylakoid membrane by plastocyanin or cytochrome c6. This Prochlorococcus marinus (strain SARG / CCMP1375 / SS120) protein is Photosystem I P700 chlorophyll a apoprotein A2.